Here is a 229-residue protein sequence, read N- to C-terminus: Glucose-induced degradation protein 8-B homolog (229 aa).

Residues 26-58 form the LisH domain; it reads QRADMNRLIMNYLVTEGFKEAAEKFRMESGIEP. One can recognise a CTLH domain in the interval 64-121; it reads SLDERIKIREMVLKGQIQEAIALINSLHPELLDTNRYLYFHLQQQHLIELIRLRETEA.

As to quaternary structure, identified in the CTLH complex that contains at least MAEA, RMND5A (or alternatively its paralog RMND5B), GID8, WDR26, and RANBP9 and/or RANBP10. Interacts with CTNNB1.

It localises to the cytoplasm. The protein resides in the nucleus. Its function is as follows. Core component of the CTLH E3 ubiquitin-protein ligase complex that selectively accepts ubiquitin from UBE2H and mediates ubiquitination and subsequent proteasomal degradation of target proteins. Acts as a positive regulator of Wnt signaling pathway by promoting beta-catenin (CTNNB1) nuclear accumulation. Required for normal Wnt signaling and normal dorsoventral patterning during embryogenesis. This is Glucose-induced degradation protein 8-B homolog (gid8b) from Danio rerio (Zebrafish).